Consider the following 297-residue polypeptide: MNLRQVEAFRAVMLTGQMTAAAELMLVTQPAISRLIKDFERATKLQLFERRGNHIIPTQEAKTLWEEVDRAFVGLNHIGNLAADIGRQAAGTLRIAAMPALANGFLPRFLAQFLHKPKLQVSLMGLPSSMVMEAVASGRADIGYADGPSERQGFLIETRSLPAMVAVPMGHRLAGLDRITPQEPGGERIIKQETGTLFAMRVEVAIGSILRRPSLEVSLSHTALSLVREAAGIAIIDPTAAIEFKDSIALRPFSIFIDAGFLEVRSANGAPSTVVDRFATEFSSFHDALMAQSGLIS.

In terms of domain architecture, HTH lysR-type spans 1-58 (MNLRQVEAFRAVMLTGQMTAAAELMLVTQPAISRLIKDFERATKLQLFERRGNHIIPT). A DNA-binding region (H-T-H motif) is located at residues 18–37 (MTAAAELMLVTQPAISRLIK).

Belongs to the LysR transcriptional regulatory family.

Its function is as follows. Positive regulatory protein for the occ operon involved in octopine catabolism and uptake. Also acts as a negative regulator of its expression. The sequence is that of Octopine catabolism/uptake operon regulatory protein OccR (occR) from Rhizobium meliloti (Ensifer meliloti).